Consider the following 387-residue polypeptide: Protein-glutamate methylesterase/protein-glutamine glutaminase 2 (387 aa).

A Response regulatory domain is found at K4 to L121. D55 carries the 4-aspartylphosphate modification. Residues A148–A183 show a composition bias toward low complexity. Positions A148 to K199 are disordered. The region spanning P192–E384 is the CheB-type methylesterase domain. Catalysis depends on residues S211, H238, and D331.

This sequence belongs to the CheB family. Post-translationally, phosphorylated by CheA. Phosphorylation of the N-terminal regulatory domain activates the methylesterase activity.

Its subcellular location is the cytoplasm. It catalyses the reaction [protein]-L-glutamate 5-O-methyl ester + H2O = L-glutamyl-[protein] + methanol + H(+). The catalysed reaction is L-glutaminyl-[protein] + H2O = L-glutamyl-[protein] + NH4(+). Functionally, involved in chemotaxis. Part of a chemotaxis signal transduction system that modulates chemotaxis in response to various stimuli. Catalyzes the demethylation of specific methylglutamate residues introduced into the chemoreceptors (methyl-accepting chemotaxis proteins or MCP) by CheR. Also mediates the irreversible deamidation of specific glutamine residues to glutamic acid. This chain is Protein-glutamate methylesterase/protein-glutamine glutaminase 2, found in Pseudomonas savastanoi pv. phaseolicola (strain 1448A / Race 6) (Pseudomonas syringae pv. phaseolicola (strain 1448A / Race 6)).